The following is an 894-amino-acid chain: Mitogen-activated protein kinase kinase kinase kinase 3 (894 aa).

N-acetylmethionine is present on Met-1. The Protein kinase domain occupies 16–273 (FELIQRIGSG…AEKLLQHPFV (258 aa)). ATP-binding positions include 22–30 (IGSGTYGDV) and Lys-45. Asp-136 (proton acceptor) is an active-site residue. Position 329 is a phosphoserine (Ser-329). The segment at 339–358 (DPPLRKETEPHHELPDSDGF) is disordered. A compositionally biased stretch (basic and acidic residues) spans 340–353 (PPLRKETEPHHELP). Residue Ser-398 is modified to Phosphoserine. Positions 408 to 537 (HVAHLEDDEG…VPKPISNGLP (130 aa)) are disordered. Residues 473–487 (HVPPRPPPPRLPPQK) are compositionally biased toward pro residues. A compositionally biased stretch (polar residues) spans 508-520 (LYQQQSEQRGTNL). Positions 556-867 (PLKIHCATSW…IFRLLGSDRV (312 aa)) constitute a CNH domain.

This sequence belongs to the protein kinase superfamily. STE Ser/Thr protein kinase family. STE20 subfamily. As to quaternary structure, interacts with SH3GL2. Interaction appears to regulate MAP4K3-mediated JNK activation. Requires Mg(2+) as cofactor.

It catalyses the reaction L-seryl-[protein] + ATP = O-phospho-L-seryl-[protein] + ADP + H(+). It carries out the reaction L-threonyl-[protein] + ATP = O-phospho-L-threonyl-[protein] + ADP + H(+). Serine/threonine kinase that plays a role in the response to environmental stress. Appears to act upstream of the JUN N-terminal pathway. Activator of the Hippo signaling pathway which plays a pivotal role in organ size control and tumor suppression by restricting proliferation and promoting apoptosis. MAP4Ks act in parallel to and are partially redundant with STK3/MST2 and STK4/MST2 in the phosphorylation and activation of LATS1/2, and establish MAP4Ks as components of the expanded Hippo pathway. The sequence is that of Mitogen-activated protein kinase kinase kinase kinase 3 (Map4k3) from Mus musculus (Mouse).